Here is a 1128-residue protein sequence, read N- to C-terminus: Zinc finger protein 654 (1128 aa).

Residues 498–523 (GFDSLTDQSTGETDPDDVSGVQPKGH) form a disordered region. 5 C2H2-type zinc fingers span residues 572–594 (FACV…LKNH), 746–771 (FKCP…MTVH), 787–809 (GKCK…LNRH), 815–839 (YFCL…TKSH), and 844–868 (AQCS…EAQH). Residues 891 to 951 (DSNPNQEKDS…GNERSDDTVS (61 aa)) form a disordered region. 2 stretches are compositionally biased toward polar residues: residues 903–915 (NEKQ…VSTS) and 937–951 (SLVQ…DTVS). S1123 and S1127 each carry phosphoserine.

This sequence belongs to the krueppel C2H2-type zinc-finger protein family.

The protein resides in the nucleus. May be involved in transcriptional regulation. This Homo sapiens (Human) protein is Zinc finger protein 654.